Consider the following 396-residue polypeptide: Elongation factor Tu (396 aa).

The tr-type G domain maps to 10-205 (KPHVNIGTIG…AVDSYIPTPE (196 aa)). The G1 stretch occupies residues 19-26 (GHVDHGKT). Residue 19 to 26 (GHVDHGKT) participates in GTP binding. Thr26 serves as a coordination point for Mg(2+). Residues 60–64 (GITIN) are G2. A G3 region spans residues 81–84 (DCPG). GTP-binding positions include 81-85 (DCPGH) and 136-139 (NKCD). The segment at 136-139 (NKCD) is G4. Positions 174–176 (SAK) are G5.

The protein belongs to the TRAFAC class translation factor GTPase superfamily. Classic translation factor GTPase family. EF-Tu/EF-1A subfamily. As to quaternary structure, monomer.

It localises to the cytoplasm. The enzyme catalyses GTP + H2O = GDP + phosphate + H(+). Its function is as follows. GTP hydrolase that promotes the GTP-dependent binding of aminoacyl-tRNA to the A-site of ribosomes during protein biosynthesis. In Brevibacillus brevis (strain 47 / JCM 6285 / NBRC 100599), this protein is Elongation factor Tu.